Here is a 963-residue protein sequence, read N- to C-terminus: Kinesin-1 heavy chain (963 aa).

Alanine 2 carries the N-acetylalanine modification. Positions 8–325 (NIKVMCRFRP…LLFGQRAKTI (318 aa)) constitute a Kinesin motor domain. Position 85–92 (85–92 (GQTSSGKT)) interacts with ATP. Lysine 213 is covalently cross-linked (Glycyl lysine isopeptide (Lys-Gly) (interchain with G-Cter in SUMO2)). The stretch at 330–913 (CVNVELTAEQ…EAVRSKNMAR (584 aa)) forms a coiled coil. Residues 908-963 (SKNMARRGHSAQIAKPIRPGQHPAASPTHPGAVRGGGSFVQNNQPVGLRGGGGKQA) are disordered. The interval 915-963 (GHSAQIAKPIRPGQHPAASPTHPGAVRGGGSFVQNNQPVGLRGGGGKQA) is globular. Phosphoserine occurs at positions 933 and 945. Omega-N-methylarginine is present on arginine 956.

It belongs to the TRAFAC class myosin-kinesin ATPase superfamily. Kinesin family. Kinesin subfamily. In terms of assembly, oligomer composed of two heavy chains and two light chains. Interacts with GRIP1 and PPP1R42. Interacts with SYBU. Interacts with JAKMIP1. Interacts with PLEKHM2. Interacts with ECPAS. Interacts with ZFYVE27. Found in a complex with OGT, RHOT1, RHOT2 and TRAK1. Interacts with APP (via cytoplasmic domain). As to expression, expressed in the brain (at protein level). Expressed in the brain, liver, kidney, spleen, heart, lung and sciatic nerve.

It is found in the cytoplasm. The protein localises to the cytoskeleton. It localises to the cytolytic granule membrane. The protein resides in the lysosome membrane. In terms of biological role, microtubule-dependent motor required for normal distribution of mitochondria and lysosomes. Can induce formation of neurite-like membrane protrusions in non-neuronal cells in a ZFYVE27-dependent manner. Regulates centrosome and nuclear positioning during mitotic entry. During the G2 phase of the cell cycle in a BICD2-dependent manner, antagonizes dynein function and drives the separation of nuclei and centrosomes. Required for anterograde axonal transportation of MAPK8IP3/JIP3 which is essential for MAPK8IP3/JIP3 function in axon elongation. Through binding with PLEKHM2 and ARL8B, directs lysosome movement toward microtubule plus ends. Involved in NK cell-mediated cytotoxicity. Drives the polarization of cytolytic granules and microtubule-organizing centers (MTOCs) toward the immune synapse between effector NK lymphocytes and target cells. The sequence is that of Kinesin-1 heavy chain from Rattus norvegicus (Rat).